A 213-amino-acid polypeptide reads, in one-letter code: MGVHKLEPKDHLKPQNLEGISNEQIEPHFEAHYKGYVAKYNEIQEKLADQNFADRSKANQNYSEYRELKVEETFNYMGVVLHELYFGMLTPGGKGEPSEALKKKIEEDIGGLDACTNELKAAAMAFRGWAILGLDIFSGRLVVNGLDAHNVYNLTGLIPLIVIDTYEHAYYVDYKNKRPPYIDAFFKNINWDVVNERFEKAMKAYEALKDFIK.

4 residues coordinate Fe cation: His28, His82, Asp164, and His168.

This sequence belongs to the iron/manganese superoxide dismutase family. Homotetramer. Fe cation serves as cofactor.

It catalyses the reaction 2 superoxide + 2 H(+) = H2O2 + O2. Its function is as follows. Destroys superoxide anion radicals which are normally produced within the cells and which are toxic to biological systems. This chain is Superoxide dismutase [Fe] (sodB), found in Aquifex pyrophilus.